Consider the following 331-residue polypeptide: FMRFamide-related neuropeptides (331 aa).

The N-terminal stretch at 1–25 (MRCWSPCSLLVVIVIYCLSSHTSEA) is a signal peptide. The propeptide occupies 26–65 (FDLAQACVESQRLSLLPICDTIFAVQQEGAQQSADDGMRS). F71 and F83 each carry phenylalanine amide. Positions 86–94 (NVPDLPFED) are excised as a propeptide. F100 carries the post-translational modification Phenylalanine amide. A propeptide spanning residues 103 to 168 (AAPQLDDLLK…YIDDVEDSDV (66 aa)) is cleaved from the precursor. Positions 122 to 158 (QKADETSVRRKRSTDAAPQNNAENPEQKNDSAKITKR) are disordered. A compositionally biased stretch (basic and acidic residues) spans 146–158 (PEQKNDSAKITKR). Phenylalanine amide is present on residues F174 and F181. The propeptide occupies 184–194 (NPSDAGNKLTE). At F200 the chain carries Phenylalanine amide. Residues 203 to 205 (DPE) constitute a propeptide that is removed on maturation. F211 bears the Phenylalanine amide mark. Positions 214 to 216 (SDD) are excised as a propeptide. F222 carries the post-translational modification Phenylalanine amide. Positions 225–236 (NPSDVEDELEED) are excised as a propeptide. F242 is modified (phenylalanine amide). A propeptide spanning residues 245–254 (GGEDDEEEAE) is cleaved from the precursor. Residue F260 is modified to Phenylalanine amide. A propeptide spanning residues 263 to 265 (DPE) is cleaved from the precursor. F271 carries the phenylalanine amide modification. Residues 274–277 (SGED) constitute a propeptide that is removed on maturation. Residues 282-296 (RFGRNPDEQEADKRF) are compositionally biased toward basic and acidic residues. Residues 282–310 (RFGRNPDEQEADKRFMRFGRGGEDDEVST) form a disordered region. F283 carries the phenylalanine amide modification. Residues 286-293 (NPDEQEAD) constitute a propeptide that is removed on maturation. Position 299 is a phenylalanine amide (F299). A propeptide spanning residues 302-312 (GGEDDEVSTED) is cleaved from the precursor. Residue F318 is modified to Phenylalanine amide. Positions 321–331 (SADKCKGCLEG) are excised as a propeptide.

It belongs to the FARP (FMRFamide related peptide) family.

Its subcellular location is the secreted. Excitatory neurotransmitters that directly modulate chromatophore function by activating chromatophore expansion at the chromatophore neuromuscular junction. This chain is FMRFamide-related neuropeptides, found in Doryteuthis pealeii (Longfin inshore squid).